Consider the following 729-residue polypeptide: Cullin-6 (729 aa).

In terms of domain architecture, Cullin neddylation spans aspartate 659–asparagine 720. A Glycyl lysine isopeptide (Lys-Gly) (interchain with G-Cter in NEDD8) cross-link involves residue lysine 673.

The protein belongs to the cullin family. In terms of assembly, probably interacts with skr-3. Post-translationally, neddylated; which enhances the ubiquitination activity of SCF-like complex.

Functionally, probable core component of cullin-based SCF-like E3 ubiquitin-protein ligase complexes which mediate the ubiquitination and subsequent proteasomal degradation of target proteins. The sequence is that of Cullin-6 (cul-6) from Caenorhabditis elegans.